The chain runs to 233 residues: Phosphoribosylformylglycinamidine synthase subunit PurQ (233 aa).

In terms of domain architecture, Glutamine amidotransferase type-1 spans 3–233 (SAILVFPGIN…GLVAHLERAA (231 aa)). Cys-87 serves as the catalytic Nucleophile. Catalysis depends on residues His-204 and Glu-206.

As to quaternary structure, part of the FGAM synthase complex composed of 1 PurL, 1 PurQ and 2 PurS subunits.

It is found in the cytoplasm. The enzyme catalyses N(2)-formyl-N(1)-(5-phospho-beta-D-ribosyl)glycinamide + L-glutamine + ATP + H2O = 2-formamido-N(1)-(5-O-phospho-beta-D-ribosyl)acetamidine + L-glutamate + ADP + phosphate + H(+). The catalysed reaction is L-glutamine + H2O = L-glutamate + NH4(+). It participates in purine metabolism; IMP biosynthesis via de novo pathway; 5-amino-1-(5-phospho-D-ribosyl)imidazole from N(2)-formyl-N(1)-(5-phospho-D-ribosyl)glycinamide: step 1/2. Its function is as follows. Part of the phosphoribosylformylglycinamidine synthase complex involved in the purines biosynthetic pathway. Catalyzes the ATP-dependent conversion of formylglycinamide ribonucleotide (FGAR) and glutamine to yield formylglycinamidine ribonucleotide (FGAM) and glutamate. The FGAM synthase complex is composed of three subunits. PurQ produces an ammonia molecule by converting glutamine to glutamate. PurL transfers the ammonia molecule to FGAR to form FGAM in an ATP-dependent manner. PurS interacts with PurQ and PurL and is thought to assist in the transfer of the ammonia molecule from PurQ to PurL. The polypeptide is Phosphoribosylformylglycinamidine synthase subunit PurQ (Nitrobacter hamburgensis (strain DSM 10229 / NCIMB 13809 / X14)).